The sequence spans 1050 residues: MQLPRGSRVPGLVATFLFPVLCALLTFSSVRGFNLAVEQPAVYTGASGSFFGFSVDFYLPDAQSISILVGAPKANTSQPGVFEGGAVFYCPWQRNGTNCTEISFDSHGDRQRELFDTPQPKHMESKSEQWFGATVRAHGKTILACAPRYSWRTEKEEKRSDPVGTCYLSVNNFTTFVEYSPCRTDFSDAAGQGYCQGGFSAEFTKSGRVLLGGPGSYFWQGQVITATQDEIQEAYYPEYFVLEYKKQMQTRQAASSYDDSYFGYSVAVGEFSEDATEDFVVGVPKGNITYGYVTILNGTDLRSLYNFSGEQMASYFGYSVSATDLNSDGLDDLLIGAPLFMDRTHDGRVQEVGRVYVYLQGDHMESTPHLILTGMEEYGRFGSSIASLGDLDQDGFNDIAIGAPFGGEAQRGAVFIFNGQPGGVDSKPSQVLQGQWGSSQQPSFFGLSTRGGHDLDGNGYPDLIVGAFGVDTTLVYRGRPIIHASASLSISPNMFNPEEKTCTLEGNASAVSCINLSFCLNASGKHVPNSIGIKVELQLDQTKQKGAVKRALFLKTRQPQLTQTIHLLNGGKEECRAMKIYLREESEFRDKLSPIYVGLNFSLDPLAPADAHGLMPIFNYKTKNYIEQKAQIQLDCGEDNICVPDLKLNVSGDRKSVYLGDENFLTLFFNAQNLGGGAYEAELYVTLPPEAEYSGIVRNNEHLLILPCAYEMENQTRLVICDLGNPMKAGASLAGGLRFTVPHLRDSSHKVQFDFQIRSKNQNNSQSETVHLALNVEAHSTVSFFGASKPDSVIFPVANWKPGRNPVTGQEAGPEVKHVYELVNFGPSSISQGILELRCPMRVNKEYAMYVMSYAVQGLTNCTSNHPANALHLQHSPTDHPPTLNPKTVHHVERRDTARLISGSSNVLKCNEPHVDCFHLHCDVGPLEKQKRAILRVNFLVWANTFMQKENQGFTLQCDALYHIQKLPYKILPHVYPKGTHQVDTAIHWAKPESSYGVPLWIIILAILIGLLLLALLIYVLYKLGFFKRSYQYGTAMEKAELKPQAASEA.

The N-terminal stretch at 1 to 32 (MQLPRGSRVPGLVATFLFPVLCALLTFSSVRG) is a signal peptide. The Extracellular portion of the chain corresponds to 33 to 996 (FNLAVEQPAV…IHWAKPESSY (964 aa)). FG-GAP repeat units follow at residues 34–99 (NLAV…GTNC), 116–175 (DTPQ…NFTT), 183–235 (RTDF…QEAY), 249–301 (QTRQ…GTDL), 302–367 (RSLY…MEST), 368–426 (PHLI…GVDS), and 430–493 (QVLQ…ISPN). Residues N75, N95, and N98 are each glycosylated (N-linked (GlcNAc...) asparagine). 2 disulfide bridges follow: C90-C99 and C145-C166. An N-linked (GlcNAc...) asparagine glycan is attached at N172. C182 and C195 form a disulfide bridge. Residues E270, S272, D274, T276, and D278 each contribute to the Ca(2+) site. N-linked (GlcNAc...) asparagine glycans are attached at residues N287, N297, and N306. Ca(2+) is bound by residues D324, N326, D328, L330, D332, D390, D392, D394, D398, D454, D456, N458, Y460, and D462. Residues C502 and C513 are joined by a disulfide bond. N-linked (GlcNAc...) asparagine glycans are attached at residues N507, N515, N521, and N600. Residues C519 and C575 are joined by a disulfide bond. An intrachain disulfide couples C636 to C642. N649, N714, N763, and N861 each carry an N-linked (GlcNAc...) asparagine glycan. C708 and C721 are joined by a disulfide. 3 disulfide bridges follow: C839–C958, C862–C922, and C910–C917. A helical transmembrane segment spans residues 997–1022 (GVPLWIIILAILIGLLLLALLIYVLY). The Cytoplasmic segment spans residues 1023 to 1050 (KLGFFKRSYQYGTAMEKAELKPQAASEA). The GFFKR motif motif lies at 1025–1029 (GFFKR).

Belongs to the integrin alpha chain family. In terms of assembly, heterodimer of an alpha and a beta subunit. The alpha subunit is composed of a heavy and a light chain linked by a disulfide bond. Alpha-5 associates with beta-1.

The protein resides in the cell membrane. Its subcellular location is the cell junction. It localises to the focal adhesion. In terms of biological role, integrin alpha-5/beta-1 (ITGA5:ITGB1) is a receptor for fibronectin. It recognizes the sequence R-G-D in its ligands. ITGA5:ITGB1 acts as a receptor for fibrillin-1 (FBN1) and mediates R-G-D-dependent cell adhesion to FBN1. ITGA5:ITGB1 acts as a receptor for fibronectin (FN1) and mediates R-G-D-dependent cell adhesion to FN1. ITGA5:ITGB1 is a receptor for IL1B and binding is essential for IL1B signaling. ITGA5:ITGB3 is a receptor for soluble CD40LG and is required for CD40/CD40LG signaling. The sequence is that of Integrin alpha-5 (itga5) from Xenopus laevis (African clawed frog).